A 707-amino-acid chain; its full sequence is Methionine--tRNA ligase (707 aa).

Positions 13 to 23 (PYANGNFHIGH) match the 'HIGH' region motif. Residues cysteine 147, cysteine 150, cysteine 160, and cysteine 163 each contribute to the Zn(2+) site. The short motif at 344-348 (KMSKS) is the 'KMSKS' region element. Position 347 (lysine 347) interacts with ATP. The tRNA-binding domain occupies 601–707 (DFAKVDLRIA…PGATPGMRIH (107 aa)).

The protein belongs to the class-I aminoacyl-tRNA synthetase family. MetG type 1 subfamily. As to quaternary structure, homodimer. It depends on Zn(2+) as a cofactor.

The protein localises to the cytoplasm. The catalysed reaction is tRNA(Met) + L-methionine + ATP = L-methionyl-tRNA(Met) + AMP + diphosphate. Functionally, is required not only for elongation of protein synthesis but also for the initiation of all mRNA translation through initiator tRNA(fMet) aminoacylation. This chain is Methionine--tRNA ligase, found in Polaromonas naphthalenivorans (strain CJ2).